A 533-amino-acid polypeptide reads, in one-letter code: 2,3-bisphosphoglycerate-independent phosphoglycerate mutase (533 aa).

Residues Asp15 and Ser65 each contribute to the Mn(2+) site. Ser65 serves as the catalytic Phosphoserine intermediate. Substrate-binding positions include His126, 156–157 (RD), Arg188, Arg194, 258–261 (RPDR), and Lys331. Residues Asp398, His402, Asp439, His440, and His457 each coordinate Mn(2+).

This sequence belongs to the BPG-independent phosphoglycerate mutase family. Monomer. Mn(2+) is required as a cofactor.

The enzyme catalyses (2R)-2-phosphoglycerate = (2R)-3-phosphoglycerate. The protein operates within carbohydrate degradation; glycolysis; pyruvate from D-glyceraldehyde 3-phosphate: step 3/5. Catalyzes the interconversion of 2-phosphoglycerate and 3-phosphoglycerate. This is 2,3-bisphosphoglycerate-independent phosphoglycerate mutase from Nostoc sp. (strain PCC 7120 / SAG 25.82 / UTEX 2576).